A 217-amino-acid polypeptide reads, in one-letter code: ATP phosphoribosyltransferase (217 aa).

Belongs to the ATP phosphoribosyltransferase family. Short subfamily. In terms of assembly, heteromultimer composed of HisG and HisZ subunits.

It is found in the cytoplasm. It catalyses the reaction 1-(5-phospho-beta-D-ribosyl)-ATP + diphosphate = 5-phospho-alpha-D-ribose 1-diphosphate + ATP. Its pathway is amino-acid biosynthesis; L-histidine biosynthesis; L-histidine from 5-phospho-alpha-D-ribose 1-diphosphate: step 1/9. In terms of biological role, catalyzes the condensation of ATP and 5-phosphoribose 1-diphosphate to form N'-(5'-phosphoribosyl)-ATP (PR-ATP). Has a crucial role in the pathway because the rate of histidine biosynthesis seems to be controlled primarily by regulation of HisG enzymatic activity. The sequence is that of ATP phosphoribosyltransferase from Burkholderia orbicola (strain AU 1054).